Consider the following 66-residue polypeptide: UPF0434 protein Nwi_0075 (66 aa).

Belongs to the UPF0434 family.

In Nitrobacter winogradskyi (strain ATCC 25391 / DSM 10237 / CIP 104748 / NCIMB 11846 / Nb-255), this protein is UPF0434 protein Nwi_0075.